We begin with the raw amino-acid sequence, 242 residues long: 2-C-methyl-D-erythritol 4-phosphate cytidylyltransferase (242 aa).

Belongs to the IspD/TarI cytidylyltransferase family. IspD subfamily.

The enzyme catalyses 2-C-methyl-D-erythritol 4-phosphate + CTP + H(+) = 4-CDP-2-C-methyl-D-erythritol + diphosphate. It participates in isoprenoid biosynthesis; isopentenyl diphosphate biosynthesis via DXP pathway; isopentenyl diphosphate from 1-deoxy-D-xylulose 5-phosphate: step 2/6. Its function is as follows. Catalyzes the formation of 4-diphosphocytidyl-2-C-methyl-D-erythritol from CTP and 2-C-methyl-D-erythritol 4-phosphate (MEP). The protein is 2-C-methyl-D-erythritol 4-phosphate cytidylyltransferase of Vesicomyosocius okutanii subsp. Calyptogena okutanii (strain HA).